We begin with the raw amino-acid sequence, 447 residues long: Tubulin beta chain (447 aa).

Gln-11, Glu-69, Ser-138, Gly-142, Thr-143, Gly-144, Asn-204, and Asn-226 together coordinate GTP. Glu-69 provides a ligand contact to Mg(2+). The disordered stretch occupies residues 419–447 (VSEYQQYQDATADEEGEYEDEDQEAEDDM). Positions 429–447 (TADEEGEYEDEDQEAEDDM) are enriched in acidic residues.

The protein belongs to the tubulin family. Dimer of alpha and beta chains. A typical microtubule is a hollow water-filled tube with an outer diameter of 25 nm and an inner diameter of 15 nM. Alpha-beta heterodimers associate head-to-tail to form protofilaments running lengthwise along the microtubule wall with the beta-tubulin subunit facing the microtubule plus end conferring a structural polarity. Microtubules usually have 13 protofilaments but different protofilament numbers can be found in some organisms and specialized cells. Mg(2+) is required as a cofactor.

It is found in the cytoplasm. Its subcellular location is the cytoskeleton. In terms of biological role, tubulin is the major constituent of microtubules, a cylinder consisting of laterally associated linear protofilaments composed of alpha- and beta-tubulin heterodimers. Microtubules grow by the addition of GTP-tubulin dimers to the microtubule end, where a stabilizing cap forms. Below the cap, tubulin dimers are in GDP-bound state, owing to GTPase activity of alpha-tubulin. This is Tubulin beta chain (TUBB) from Hordeum vulgare (Barley).